The chain runs to 209 residues: Orotate phosphoribosyltransferase (209 aa).

Residues arginine 96, lysine 100, histidine 102, and 122 to 130 each bind 5-phospho-alpha-D-ribose 1-diphosphate; that span reads EDLISTGGS. Serine 126 provides a ligand contact to orotate.

Belongs to the purine/pyrimidine phosphoribosyltransferase family. PyrE subfamily. Homodimer. It depends on Mg(2+) as a cofactor.

The catalysed reaction is orotidine 5'-phosphate + diphosphate = orotate + 5-phospho-alpha-D-ribose 1-diphosphate. It functions in the pathway pyrimidine metabolism; UMP biosynthesis via de novo pathway; UMP from orotate: step 1/2. Functionally, catalyzes the transfer of a ribosyl phosphate group from 5-phosphoribose 1-diphosphate to orotate, leading to the formation of orotidine monophosphate (OMP). The sequence is that of Orotate phosphoribosyltransferase from Listeria monocytogenes serovar 1/2a (strain ATCC BAA-679 / EGD-e).